The following is a 106-amino-acid chain: DNA-directed RNA polymerase subunit Rpo6 (106 aa).

The protein belongs to the archaeal Rpo6/eukaryotic RPB6 RNA polymerase subunit family. Part of the RNA polymerase complex.

The protein localises to the cytoplasm. The enzyme catalyses RNA(n) + a ribonucleoside 5'-triphosphate = RNA(n+1) + diphosphate. DNA-dependent RNA polymerase (RNAP) catalyzes the transcription of DNA into RNA using the four ribonucleoside triphosphates as substrates. The protein is DNA-directed RNA polymerase subunit Rpo6 of Pyrobaculum aerophilum (strain ATCC 51768 / DSM 7523 / JCM 9630 / CIP 104966 / NBRC 100827 / IM2).